A 97-amino-acid polypeptide reads, in one-letter code: Co-chaperonin GroES (97 aa).

It belongs to the GroES chaperonin family. In terms of assembly, heptamer of 7 subunits arranged in a ring. Interacts with the chaperonin GroEL.

The protein localises to the cytoplasm. In terms of biological role, together with the chaperonin GroEL, plays an essential role in assisting protein folding. The GroEL-GroES system forms a nano-cage that allows encapsulation of the non-native substrate proteins and provides a physical environment optimized to promote and accelerate protein folding. GroES binds to the apical surface of the GroEL ring, thereby capping the opening of the GroEL channel. The protein is Co-chaperonin GroES of Buchnera aphidicola subsp. Thelaxes suberi.